The following is a 346-amino-acid chain: NADP-dependent alcohol dehydrogenase C (346 aa).

C41, H63, C94, C97, C100, C108, and C158 together coordinate Zn(2+).

This sequence belongs to the zinc-containing alcohol dehydrogenase family. The cofactor is Zn(2+).

It catalyses the reaction a primary alcohol + NADP(+) = an aldehyde + NADPH + H(+). This is NADP-dependent alcohol dehydrogenase C (adhC) from Mycobacterium bovis (strain ATCC BAA-935 / AF2122/97).